We begin with the raw amino-acid sequence, 344 residues long: Sulfate/thiosulfate import ATP-binding protein CysA (344 aa).

The ABC transporter domain occupies 3-237; it reads IEVRNLVKKF…PATAFVHGFI (235 aa). 35-42 serves as a coordination point for ATP; the sequence is GPSGSGKT.

Belongs to the ABC transporter superfamily. Sulfate/tungstate importer (TC 3.A.1.6) family. The complex is composed of two ATP-binding proteins (CysA), two transmembrane proteins (CysT and CysW) and a solute-binding protein (CysP).

The protein resides in the cell inner membrane. It carries out the reaction sulfate(out) + ATP + H2O = sulfate(in) + ADP + phosphate + H(+). It catalyses the reaction thiosulfate(out) + ATP + H2O = thiosulfate(in) + ADP + phosphate + H(+). Functionally, part of the ABC transporter complex CysAWTP involved in sulfate/thiosulfate import. Responsible for energy coupling to the transport system. The protein is Sulfate/thiosulfate import ATP-binding protein CysA of Bradyrhizobium diazoefficiens (strain JCM 10833 / BCRC 13528 / IAM 13628 / NBRC 14792 / USDA 110).